We begin with the raw amino-acid sequence, 124 residues long: Ribonuclease pancreatic (124 aa).

Basic and acidic residues predominate over residues 1-13; sequence KETAAAKFERQHM. The tract at residues 1–22 is disordered; it reads KETAAAKFERQHMDSSTSAASS. Lysine 7 and arginine 10 together coordinate substrate. The active-site Proton acceptor is the histidine 12. 4 disulfide bridges follow: cysteine 26–cysteine 84, cysteine 40–cysteine 95, cysteine 58–cysteine 110, and cysteine 65–cysteine 72. Asparagine 34 is a glycosylation site (N-linked (GlcNAc...) asparagine). Substrate is bound by residues 41–45, lysine 66, and arginine 85; that span reads KPVNT. The active-site Proton donor is the histidine 119.

This sequence belongs to the pancreatic ribonuclease family. In terms of assembly, monomer. Interacts with and forms tight 1:1 complexes with RNH1. Dimerization of two such complexes may occur. Interaction with RNH1 inhibits this protein. As to expression, pancreas.

The protein localises to the secreted. The catalysed reaction is an [RNA] containing cytidine + H2O = an [RNA]-3'-cytidine-3'-phosphate + a 5'-hydroxy-ribonucleotide-3'-[RNA].. It carries out the reaction an [RNA] containing uridine + H2O = an [RNA]-3'-uridine-3'-phosphate + a 5'-hydroxy-ribonucleotide-3'-[RNA].. Its function is as follows. Endonuclease that catalyzes the cleavage of RNA on the 3' side of pyrimidine nucleotides. Acts on single-stranded and double-stranded RNA. This chain is Ribonuclease pancreatic (RNASE1), found in Bison bison (American bison).